The sequence spans 422 residues: Proline-rich protein 22 (422 aa).

Disordered regions lie at residues 1–35 (MQHP…PAPT), 306–325 (LCEV…SADD), and 363–422 (EEQP…ATPH). Positions 383 to 400 (GKRKASTAKKGKPGRKAR) are enriched in basic residues. The span at 413–422 (PREDLGATPH) shows a compositional bias: basic and acidic residues.

The chain is Proline-rich protein 22 (PRR22) from Homo sapiens (Human).